The primary structure comprises 389 residues: S-adenosylmethionine synthase 3 (389 aa).

E9 contributes to the Mg(2+) binding site. H15 lines the ATP pocket. E43 is a K(+) binding site. The L-methionine site is built by E56 and Q99. ATP contacts are provided by residues 167–169, 235–238, D246, 252–253, A269, K273, and K277; these read DGK, SGRF, and RK. Position 246 (D246) interacts with L-methionine. An L-methionine-binding site is contributed by K277.

Belongs to the AdoMet synthase family. In terms of assembly, homotetramer. Mn(2+) is required as a cofactor. Requires Mg(2+) as cofactor. The cofactor is Co(2+). K(+) serves as cofactor.

It localises to the cytoplasm. It catalyses the reaction L-methionine + ATP + H2O = S-adenosyl-L-methionine + phosphate + diphosphate. The protein operates within amino-acid biosynthesis; S-adenosyl-L-methionine biosynthesis; S-adenosyl-L-methionine from L-methionine: step 1/1. Its function is as follows. Catalyzes the formation of S-adenosylmethionine from methionine and ATP. The reaction comprises two steps that are both catalyzed by the same enzyme: formation of S-adenosylmethionine (AdoMet) and triphosphate, and subsequent hydrolysis of the triphosphate. In Vitis vinifera (Grape), this protein is S-adenosylmethionine synthase 3 (METK3).